The chain runs to 655 residues: DNA topoisomerase 4 subunit B (655 aa).

Residues Tyr-9, Asn-49, Asp-76, 116-122, and Lys-340 each bind ATP; that span reads GLHGVGA. A compositionally biased stretch (basic and acidic residues) spans 387–397; the sequence is AARKAREEARS. Residues 387–419 form a disordered region; the sequence is AARKAREEARSGKKRKKSEATLSGKLTPAGSRN. Positions 423 to 537 constitute a Toprim domain; the sequence is NELYLVEGDS…HGKVFIALPP (115 aa). Residues Glu-429, Asp-502, and Asp-504 each contribute to the Mg(2+) site.

This sequence belongs to the type II topoisomerase family. ParE type 2 subfamily. As to quaternary structure, heterotetramer composed of ParC and ParE. It depends on Mg(2+) as a cofactor. Mn(2+) serves as cofactor. The cofactor is Ca(2+).

The enzyme catalyses ATP-dependent breakage, passage and rejoining of double-stranded DNA.. Topoisomerase IV is essential for chromosome segregation. It relaxes supercoiled DNA. Performs the decatenation events required during the replication of a circular DNA molecule. This Bacillus subtilis (strain 168) protein is DNA topoisomerase 4 subunit B.